The chain runs to 299 residues: Ethylmalonyl-CoA decarboxylase (299 aa).

Lys-209 bears the N6-acetyllysine; alternate mark. Position 209 is an N6-succinyllysine; alternate (Lys-209). Residue Lys-293 is modified to N6-succinyllysine.

It belongs to the enoyl-CoA hydratase/isomerase family.

It is found in the cytoplasm. The protein resides in the cytosol. The catalysed reaction is (2S)-ethylmalonyl-CoA + H(+) = butanoyl-CoA + CO2. The enzyme catalyses (S)-methylmalonyl-CoA + H(+) = propanoyl-CoA + CO2. It catalyses the reaction (2R)-ethylmalonyl-CoA + H(+) = butanoyl-CoA + CO2. Its function is as follows. Decarboxylates ethylmalonyl-CoA, a potentially toxic metabolite, to form butyryl-CoA, suggesting it might be involved in metabolite proofreading. Acts preferentially on (S)-ethylmalonyl-CoA but also has some activity on the (R)-isomer. Also has methylmalonyl-CoA decarboxylase activity at lower level. This Rattus norvegicus (Rat) protein is Ethylmalonyl-CoA decarboxylase (Echdc1).